The following is a 361-amino-acid chain: Phosphoserine aminotransferase (361 aa).

R42 serves as a coordination point for L-glutamate. Residues 76–77, W102, T153, D173, and Q196 each bind pyridoxal 5'-phosphate; that span reads AR. N6-(pyridoxal phosphate)lysine is present on K197. Residue 238–239 participates in pyridoxal 5'-phosphate binding; the sequence is NT.

The protein belongs to the class-V pyridoxal-phosphate-dependent aminotransferase family. SerC subfamily. In terms of assembly, homodimer. Requires pyridoxal 5'-phosphate as cofactor.

It localises to the cytoplasm. The enzyme catalyses O-phospho-L-serine + 2-oxoglutarate = 3-phosphooxypyruvate + L-glutamate. The catalysed reaction is 4-(phosphooxy)-L-threonine + 2-oxoglutarate = (R)-3-hydroxy-2-oxo-4-phosphooxybutanoate + L-glutamate. The protein operates within amino-acid biosynthesis; L-serine biosynthesis; L-serine from 3-phospho-D-glycerate: step 2/3. It functions in the pathway cofactor biosynthesis; pyridoxine 5'-phosphate biosynthesis; pyridoxine 5'-phosphate from D-erythrose 4-phosphate: step 3/5. Its function is as follows. Catalyzes the reversible conversion of 3-phosphohydroxypyruvate to phosphoserine and of 3-hydroxy-2-oxo-4-phosphonooxybutanoate to phosphohydroxythreonine. The chain is Phosphoserine aminotransferase from Buchnera aphidicola subsp. Schizaphis graminum (strain Sg).